A 200-amino-acid polypeptide reads, in one-letter code: NADH-quinone oxidoreductase subunit C (200 aa).

This sequence belongs to the complex I 30 kDa subunit family. NDH-1 is composed of 14 different subunits. Subunits NuoB, C, D, E, F, and G constitute the peripheral sector of the complex.

It localises to the cell inner membrane. It catalyses the reaction a quinone + NADH + 5 H(+)(in) = a quinol + NAD(+) + 4 H(+)(out). NDH-1 shuttles electrons from NADH, via FMN and iron-sulfur (Fe-S) centers, to quinones in the respiratory chain. The immediate electron acceptor for the enzyme in this species is believed to be ubiquinone. Couples the redox reaction to proton translocation (for every two electrons transferred, four hydrogen ions are translocated across the cytoplasmic membrane), and thus conserves the redox energy in a proton gradient. This is NADH-quinone oxidoreductase subunit C from Agrobacterium fabrum (strain C58 / ATCC 33970) (Agrobacterium tumefaciens (strain C58)).